The chain runs to 176 residues: NADH-quinone oxidoreductase subunit I 1 (176 aa).

2 consecutive 4Fe-4S ferredoxin-type domains span residues 45–77 and 87–116; these read IVLTRDPEGGERCVACYLCSAACPVDCISMEAT and RWFRINFSRCIFCGLCAEACPTLAIQMTPD. Residues C57, C60, C63, C67, C96, C99, C102, and C106 each coordinate [4Fe-4S] cluster.

The protein belongs to the complex I 23 kDa subunit family. NDH-1 is composed of 14 different subunits. Subunits NuoA, H, J, K, L, M, N constitute the membrane sector of the complex. [4Fe-4S] cluster serves as cofactor.

It localises to the cell inner membrane. It catalyses the reaction a quinone + NADH + 5 H(+)(in) = a quinol + NAD(+) + 4 H(+)(out). NDH-1 shuttles electrons from NADH, via FMN and iron-sulfur (Fe-S) centers, to quinones in the respiratory chain. The immediate electron acceptor for the enzyme in this species is believed to be ubiquinone. Couples the redox reaction to proton translocation (for every two electrons transferred, four hydrogen ions are translocated across the cytoplasmic membrane), and thus conserves the redox energy in a proton gradient. In Geobacter metallireducens (strain ATCC 53774 / DSM 7210 / GS-15), this protein is NADH-quinone oxidoreductase subunit I 1.